We begin with the raw amino-acid sequence, 34 residues long: Protamine (34 aa).

A disordered region spans residues 1-34 (PRRRRQASRPVRRRRRTRRSTAERRRRRVVRRRR).

Testis.

The protein localises to the nucleus. Its subcellular location is the chromosome. Its function is as follows. Protamines substitute for histones in the chromatin of sperm during the haploid phase of spermatogenesis. They compact sperm DNA into a highly condensed, stable and inactive complex. The protein is Protamine of Dicentrarchus labrax (European seabass).